The sequence spans 97 residues: Putative septation protein SpoVG (97 aa).

Belongs to the SpoVG family.

Its function is as follows. Could be involved in septation. The protein is Putative septation protein SpoVG of Borreliella afzelii (strain PKo) (Borrelia afzelii).